A 65-amino-acid chain; its full sequence is Oxiana weak toxin (65 aa).

Intrachain disulfides connect cysteine 3–cysteine 24, cysteine 6–cysteine 11, cysteine 17–cysteine 42, cysteine 46–cysteine 57, and cysteine 58–cysteine 63.

This sequence belongs to the three-finger toxin family. Ancestral subfamily. Orphan group II sub-subfamily. As to expression, expressed by the venom gland.

The protein resides in the secreted. In terms of biological role, binds to muscle and neuronal nicotinic acetylcholine receptors (nAChR). It binds to extracellular domain of rat alpha-7/CHRNA7 nAChR (IC(50)=2.2 uM) and to Torpedo californica membranes (IC(50)=30 uM). The protein is Oxiana weak toxin of Naja oxiana (Central Asian cobra).